The following is a 34-amino-acid chain: Omega-ctenitoxin-Pn2a (34 aa).

3 cysteine pairs are disulfide-bonded: cysteine 2/cysteine 16, cysteine 9/cysteine 26, and cysteine 15/cysteine 28.

The protein belongs to the neurotoxin 02 (plectoxin) family. 01 (Tx3) subfamily. As to expression, expressed by the venom gland.

The protein resides in the secreted. Functionally, inhibits all known high-voltage activated calcium channels (L-, P/Q- and R-type currents) (Cav), and most effectively the P/Q- (Cav2.1/CACNA1A) and R-type (Cav2.3/CACNA1E) currents. In rat brain, inhibits glutamate release, neuronal death and loss of neurotransmission in the hippocampus resulting from ischemia. In vivo, induces rapid general flaccid paralysis followed by death in 10-30 minutes at dose levels of 5 ug per mouse. The sequence is that of Omega-ctenitoxin-Pn2a from Phoneutria nigriventer (Brazilian armed spider).